A 421-amino-acid polypeptide reads, in one-letter code: Gamma-glutamyl phosphate reductase (421 aa).

This sequence belongs to the gamma-glutamyl phosphate reductase family.

Its subcellular location is the cytoplasm. The enzyme catalyses L-glutamate 5-semialdehyde + phosphate + NADP(+) = L-glutamyl 5-phosphate + NADPH + H(+). It functions in the pathway amino-acid biosynthesis; L-proline biosynthesis; L-glutamate 5-semialdehyde from L-glutamate: step 2/2. Functionally, catalyzes the NADPH-dependent reduction of L-glutamate 5-phosphate into L-glutamate 5-semialdehyde and phosphate. The product spontaneously undergoes cyclization to form 1-pyrroline-5-carboxylate. The sequence is that of Gamma-glutamyl phosphate reductase from Leptospira biflexa serovar Patoc (strain Patoc 1 / ATCC 23582 / Paris).